Here is a 218-residue protein sequence, read N- to C-terminus: UPF0173 metal-dependent hydrolase Mpal_1063 (218 aa).

Belongs to the UPF0173 family.

In Methanosphaerula palustris (strain ATCC BAA-1556 / DSM 19958 / E1-9c), this protein is UPF0173 metal-dependent hydrolase Mpal_1063.